A 211-amino-acid chain; its full sequence is Small ribosomal subunit protein bS6c alpha (211 aa).

The segment covering 1–19 has biased composition (low complexity); it reads MATFSLTSTLPSSSPTTSL. Disordered stretches follow at residues 1 to 25 and 80 to 100; these read MATFSLTSTLPSSSPTTSLHSIPKP and DEDPPSTPPAGLAVEEKPEPQ. A chloroplast-targeting transit peptide spans 1–65; the sequence is MATFSLTSTL…YGPYVKAIAL (65 aa).

Belongs to the bacterial ribosomal protein bS6 family. As to quaternary structure, component of the chloroplast small ribosomal subunit (SSU). Mature 70S chloroplast ribosomes of higher plants consist of a small (30S) and a large (50S) subunit. The 30S small subunit contains 1 molecule of ribosomal RNA (16S rRNA) and 24 different proteins. The 50S large subunit contains 3 rRNA molecules (23S, 5S and 4.5S rRNA) and 33 different proteins.

The protein localises to the plastid. It localises to the chloroplast. Component of the chloroplast ribosome (chloro-ribosome), a dedicated translation machinery responsible for the synthesis of chloroplast genome-encoded proteins, including proteins of the transcription and translation machinery and components of the photosynthetic apparatus. In Spinacia oleracea (Spinach), this protein is Small ribosomal subunit protein bS6c alpha (RPS6).